The sequence spans 144 residues: Small ribosomal subunit protein uS11c (144 aa).

It belongs to the universal ribosomal protein uS11 family. Part of the 30S ribosomal subunit.

It localises to the plastid. Its subcellular location is the chloroplast. The polypeptide is Small ribosomal subunit protein uS11c (Oenothera biennis (German evening primrose)).